We begin with the raw amino-acid sequence, 104 residues long: Integration host factor subunit beta (104 aa).

The protein belongs to the bacterial histone-like protein family. As to quaternary structure, heterodimer of an alpha and a beta chain.

Functionally, this protein is one of the two subunits of integration host factor, a specific DNA-binding protein that functions in genetic recombination as well as in transcriptional and translational control. This chain is Integration host factor subunit beta, found in Chromobacterium violaceum (strain ATCC 12472 / DSM 30191 / JCM 1249 / CCUG 213 / NBRC 12614 / NCIMB 9131 / NCTC 9757 / MK).